We begin with the raw amino-acid sequence, 228 residues long: MYKLLMFRDDKLLRRALTHRSYVNENPEEGEHNERLEFLGDAILNFLSGEYLYRSHPDRGEDELTRRRSALVDEKQLAKFAIEVGLDFKMRLGKGAIRDGGYQNPNLLSSTFEAVIGAYYLDNNSNIEAVRAIIEPLFESVPEQIVVVRSNVDSKNRFQEWVQRNIGPTPPKYLTEQIGGFSHAPEFKATVLVGEKEYGEGIGKNKKDAEKAAAENALANLNKQELLP.

One can recognise an RNase III domain in the interval 1–124 (MYKLLMFRDD…VIGAYYLDNN (124 aa)). Residue E37 coordinates Mg(2+). D41 is a catalytic residue. Mg(2+)-binding residues include S110 and E113. E113 is an active-site residue. The 71-residue stretch at 153 to 223 (DSKNRFQEWV…AENALANLNK (71 aa)) folds into the DRBM domain.

The protein belongs to the ribonuclease III family. As to quaternary structure, homodimer. It depends on Mg(2+) as a cofactor.

It localises to the cytoplasm. It carries out the reaction Endonucleolytic cleavage to 5'-phosphomonoester.. Its function is as follows. Digests double-stranded RNA. Involved in the processing of primary rRNA transcript to yield the immediate precursors to the large and small rRNAs (23S and 16S). Processes some mRNAs, and tRNAs when they are encoded in the rRNA operon. Processes pre-crRNA and tracrRNA of type II CRISPR loci if present in the organism. The sequence is that of Ribonuclease 3 1 from Nostoc sp. (strain PCC 7120 / SAG 25.82 / UTEX 2576).